Here is a 152-residue protein sequence, read N- to C-terminus: Transcriptional regulator MraZ (152 aa).

SpoVT-AbrB domains follow at residues 5-52 (AHAI…PLCE) and 81-124 (ASEC…SETR).

Belongs to the MraZ family. As to quaternary structure, forms oligomers.

It localises to the cytoplasm. The protein resides in the nucleoid. In Tolumonas auensis (strain DSM 9187 / NBRC 110442 / TA 4), this protein is Transcriptional regulator MraZ.